The following is a 147-amino-acid chain: Male-specific protein scotti (147 aa).

Positions 55 to 93 (PQEPPLGVFPAQGGPNGPPRRRKKRSFYTMTKPTPPCQS) are disordered. The span at 82 to 93 (YTMTKPTPPCQS) shows a compositional bias: polar residues. A glycan (N-linked (GlcNAc...) asparagine) is linked at Asn128.

This sequence belongs to the male-specific scotti family. Expressed in primary spermatocytes and round spermatids. Low expression is seen in very short elongating cysts, but were detected at high levels in a few longer spermatid cysts.

Post-meiotically transcribed gene that has a role in late spermiogenesis; required for actin cone progression during spermatid individualization. In Drosophila melanogaster (Fruit fly), this protein is Male-specific protein scotti.